Consider the following 704-residue polypeptide: Elongation factor G (704 aa).

One can recognise a tr-type G domain in the interval Asp-8–Leu-291. Residues Ala-17–Thr-24, Asp-90–His-94, and Asn-144–Asp-147 contribute to the GTP site.

The protein belongs to the TRAFAC class translation factor GTPase superfamily. Classic translation factor GTPase family. EF-G/EF-2 subfamily.

The protein localises to the cytoplasm. In terms of biological role, catalyzes the GTP-dependent ribosomal translocation step during translation elongation. During this step, the ribosome changes from the pre-translocational (PRE) to the post-translocational (POST) state as the newly formed A-site-bound peptidyl-tRNA and P-site-bound deacylated tRNA move to the P and E sites, respectively. Catalyzes the coordinated movement of the two tRNA molecules, the mRNA and conformational changes in the ribosome. The sequence is that of Elongation factor G from Chlorobium phaeovibrioides (strain DSM 265 / 1930) (Prosthecochloris vibrioformis (strain DSM 265)).